The chain runs to 335 residues: (+)-caryolan-1-ol synthase (335 aa).

Residues Asp83, Asp87, Asn220, Ser224, and Glu228 each contribute to the Mg(2+) site. Residues 83 to 87 (DDEFD) carry the DDXXD motif motif. An NSE/DTE motif motif is present at residues 220–228 (NDICSFEKE).

This sequence belongs to the terpene synthase family. The cofactor is Mg(2+). Mn(2+) serves as cofactor.

The catalysed reaction is (2E,6E)-farnesyl diphosphate = (+)-(E)-beta-caryophyllene + diphosphate. The enzyme catalyses (+)-(E)-beta-caryophyllene + H2O = (+)-caryolan-1-ol. The protein operates within secondary metabolite biosynthesis; terpenoid biosynthesis. Functionally, sesquiterpene cyclase that first catalyzes the cyclization of farnesyl diphosphate (FPP) to the bicyclic sesquiterpene (+)-beta-caryophyllene intermediate, and then its conversion to (+)-caryolan-1-ol via a second cyclization and the addition of a water molecule. The sequence is that of (+)-caryolan-1-ol synthase (gcoA) from Streptomyces griseus subsp. griseus (strain JCM 4626 / CBS 651.72 / NBRC 13350 / KCC S-0626 / ISP 5235).